Reading from the N-terminus, the 1021-residue chain is Sodium/potassium-transporting ATPase subunit alpha-1 (1021 aa).

Positions 1-5 (MGKGV) are excised as a propeptide. The segment covering 1 to 11 (MGKGVGRDKYE) has biased composition (basic and acidic residues). Positions 1-36 (MGKGVGRDKYEPAAVSEHGDKKKAKKERDMDELKKE) are disordered. Over 6-85 (GRDKYEPAAV…NALTPPPTTP (80 aa)) the chain is Cytoplasmic. Lys-9 carries the N6-acetyllysine modification. Tyr-10 bears the Phosphotyrosine mark. Ser-16 carries the post-translational modification Phosphoserine; by PKC. Residue Lys-21 is modified to N6-acetyllysine. Residues 26-36 (KERDMDELKKE) are compositionally biased toward basic and acidic residues. Phosphoserine is present on residues Ser-38 and Ser-45. The tract at residues 80-82 (PPP) is phosphoinositide-3 kinase binding. A helical transmembrane segment spans residues 86–106 (EWVKFCRQLFGGFSMLLWIGA). The Extracellular portion of the chain corresponds to 107–129 (VLCFLAYGIQAATEEEPQNDNLY). Residues 130 to 150 (LGVVLSAVVIITGCFSYYQEA) form a helical membrane-spanning segment. At 151 to 286 (KSSKIMESFK…GGQTPIAAEI (136 aa)) the chain is on the cytoplasmic side. Ser-226 carries the phosphoserine modification. Tyr-258 carries the post-translational modification Phosphotyrosine. A helical transmembrane segment spans residues 287 to 306 (EHFIHIITGVAVFLGVSFFI). Topologically, residues 307 to 318 (LSLILEYTWLEA) are extracellular. Residues 319–336 (VIFLIGIIVANVPEGLLA) form a helical membrane-spanning segment. The Cytoplasmic segment spans residues 337–770 (TVTVCLTLTA…EEGRLIFDNL (434 aa)). The 4-aspartylphosphate intermediate role is filled by Asp-374. Ser-450 and Ser-482 each carry phosphoserine. Residue Lys-485 participates in ATP binding. Tyr-540 carries the phosphotyrosine modification. Residues 594–715 (RAAVPDAVGK…QGAIVAVTGD (122 aa)) form a mediates interaction with SCN7A region. A Phosphoserine modification is found at Ser-666. 2 residues coordinate Mg(2+): Asp-715 and Asp-719. Residues 771-790 (KKSIAYTLTSNIPEITPFLI) form a helical membrane-spanning segment. At 791-800 (FIIANIPLPL) the chain is on the extracellular side. The chain crosses the membrane as a helical span at residues 801–821 (GTVTILCIDLGTDMVPAISLA). Over 822–841 (YEQAESDIMKRQPRNPQTDK) the chain is Cytoplasmic. A helical transmembrane segment spans residues 842 to 864 (LVNERLISMAYGQIGMIQALGGF). Topologically, residues 865–916 (FTYFVIMAENGFLPNHLLGIRVTWDDRWINDVEDSYGQQWTYEQRKIVEFTC) are extracellular. The chain crosses the membrane as a helical span at residues 917-936 (HTAFFVSIVVVQWADLVICK). The Cytoplasmic segment spans residues 937 to 949 (TRRNSVFQQGMKN). Phosphoserine; by PKA is present on Ser-941. A helical transmembrane segment spans residues 950 to 968 (KILIFGLFEETALAAFLSY). Residues 969 to 983 (CPGMGVALRMYPLKP) are Extracellular-facing. The helical transmembrane segment at 984–1004 (TWWFCAFPYSLLIFVYDEVRK) threads the bilayer. Residues 1005–1021 (LIIRRRPGGWVEKETYY) lie on the Cytoplasmic side of the membrane.

It belongs to the cation transport ATPase (P-type) (TC 3.A.3) family. Type IIC subfamily. As to quaternary structure, the sodium/potassium-transporting ATPase is composed of a catalytic alpha subunit, an auxiliary non-catalytic beta subunit and an additional regulatory subunit. Interacts with regulatory subunit FXYD1. Interacts with regulatory subunit FXYD3. Interacts with SIK1. Interacts with SLC35G1 and STIM1. Interacts with CLN3; this interaction regulates the sodium/potassium-transporting ATPase complex localization at the plasma membrane. Interacts with SCN7A; activates ATP1A1 P-type sodium:potassium-exchanging transporter activity which indirectly signals to nearby neurons to regulate sodium homeostasis. Post-translationally, phosphorylation on Tyr-10 modulates pumping activity. Phosphorylation of Ser-941 by PKA modulates the response of ATP1A1 to PKC. Dephosphorylation by protein phosphatase 2A (PP2A) following increases in intracellular sodium, leading to increase catalytic activity.

It localises to the cell membrane. The protein localises to the basolateral cell membrane. Its subcellular location is the sarcolemma. The protein resides in the cell projection. It is found in the axon. It localises to the melanosome. The catalysed reaction is K(+)(out) + Na(+)(in) + ATP + H2O = K(+)(in) + Na(+)(out) + ADP + phosphate + H(+). This is the catalytic component of the active enzyme, which catalyzes the hydrolysis of ATP coupled with the exchange of sodium and potassium ions across the plasma membrane. This action creates the electrochemical gradient of sodium and potassium ions, providing the energy for active transport of various nutrients. Could also be part of an osmosensory signaling pathway that senses body-fluid sodium levels and controls salt intake behavior as well as voluntary water intake to regulate sodium homeostasis. This is Sodium/potassium-transporting ATPase subunit alpha-1 (ATP1A1) from Bos taurus (Bovine).